A 209-amino-acid chain; its full sequence is Octanoyltransferase (209 aa).

One can recognise a BPL/LPL catalytic domain in the interval 30–209 (DHEPEIIYLV…IQTEFNKIFK (180 aa)). Residues 69-76 (RGGKFTFH), 143-145 (AIG), and 156-158 (GVA) each bind substrate. C174 acts as the Acyl-thioester intermediate in catalysis.

This sequence belongs to the LipB family.

The protein resides in the cytoplasm. It catalyses the reaction octanoyl-[ACP] + L-lysyl-[protein] = N(6)-octanoyl-L-lysyl-[protein] + holo-[ACP] + H(+). It participates in protein modification; protein lipoylation via endogenous pathway; protein N(6)-(lipoyl)lysine from octanoyl-[acyl-carrier-protein]: step 1/2. In terms of biological role, catalyzes the transfer of endogenously produced octanoic acid from octanoyl-acyl-carrier-protein onto the lipoyl domains of lipoate-dependent enzymes. Lipoyl-ACP can also act as a substrate although octanoyl-ACP is likely to be the physiological substrate. The sequence is that of Octanoyltransferase from Rickettsia africae (strain ESF-5).